Reading from the N-terminus, the 288-residue chain is 4-diphosphocytidyl-2-C-methyl-D-erythritol kinase (288 aa).

Residue K11 is part of the active site. P100–S110 lines the ATP pocket. Residue D140 is part of the active site.

The protein belongs to the GHMP kinase family. IspE subfamily.

The enzyme catalyses 4-CDP-2-C-methyl-D-erythritol + ATP = 4-CDP-2-C-methyl-D-erythritol 2-phosphate + ADP + H(+). The protein operates within isoprenoid biosynthesis; isopentenyl diphosphate biosynthesis via DXP pathway; isopentenyl diphosphate from 1-deoxy-D-xylulose 5-phosphate: step 3/6. Its function is as follows. Catalyzes the phosphorylation of the position 2 hydroxy group of 4-diphosphocytidyl-2C-methyl-D-erythritol. The sequence is that of 4-diphosphocytidyl-2-C-methyl-D-erythritol kinase from Wolbachia sp. subsp. Drosophila simulans (strain wRi).